The chain runs to 1079 residues: Error-prone DNA polymerase (1079 aa).

Belongs to the DNA polymerase type-C family. DnaE2 subfamily.

The protein resides in the cytoplasm. It carries out the reaction DNA(n) + a 2'-deoxyribonucleoside 5'-triphosphate = DNA(n+1) + diphosphate. Its function is as follows. DNA polymerase involved in damage-induced mutagenesis and translesion synthesis (TLS). It is not the major replicative DNA polymerase. The protein is Error-prone DNA polymerase of Ralstonia pickettii (strain 12J).